Reading from the N-terminus, the 205-residue chain is Holliday junction branch migration complex subunit RuvA (205 aa).

Positions 1 to 65 (MIAKLKGILD…EDRIHLFGFL (65 aa)) are domain I. The segment at 66–144 (DNTEKVAFNM…NINTIANNTS (79 aa)) is domain II. Residues 145–153 (LAILSTDSN) form a flexible linker region. The segment at 154–205 (THDNILSDAITALIALGISRAEATQILSDIYALFPSISVNELVRTALQRRAK) is domain III.

The protein belongs to the RuvA family. Homotetramer. Forms an RuvA(8)-RuvB(12)-Holliday junction (HJ) complex. HJ DNA is sandwiched between 2 RuvA tetramers; dsDNA enters through RuvA and exits via RuvB. An RuvB hexamer assembles on each DNA strand where it exits the tetramer. Each RuvB hexamer is contacted by two RuvA subunits (via domain III) on 2 adjacent RuvB subunits; this complex drives branch migration. In the full resolvosome a probable DNA-RuvA(4)-RuvB(12)-RuvC(2) complex forms which resolves the HJ.

Its subcellular location is the cytoplasm. In terms of biological role, the RuvA-RuvB-RuvC complex processes Holliday junction (HJ) DNA during genetic recombination and DNA repair, while the RuvA-RuvB complex plays an important role in the rescue of blocked DNA replication forks via replication fork reversal (RFR). RuvA specifically binds to HJ cruciform DNA, conferring on it an open structure. The RuvB hexamer acts as an ATP-dependent pump, pulling dsDNA into and through the RuvAB complex. HJ branch migration allows RuvC to scan DNA until it finds its consensus sequence, where it cleaves and resolves the cruciform DNA. The protein is Holliday junction branch migration complex subunit RuvA of Orientia tsutsugamushi (strain Boryong) (Rickettsia tsutsugamushi).